Consider the following 108-residue polypeptide: Mitochondrial pyruvate carrier 3 (108 aa).

The next 3 membrane-spanning stretches (helical) occupy residues 19 to 35 (IHFW…IANI), 51 to 67 (IVIT…STVI), and 74 to 90 (LFSV…YQLT).

This sequence belongs to the mitochondrial pyruvate carrier (MPC) (TC 2.A.105) family. As to expression, abundant in leaf and particularly in the guard cells.

The protein resides in the mitochondrion. It localises to the mitochondrion inner membrane. Its function is as follows. Mediates the uptake of pyruvate into mitochondria. Negatively regulates ABA-induced guard cell signaling and mediates drought stress responses. The sequence is that of Mitochondrial pyruvate carrier 3 from Arabidopsis thaliana (Mouse-ear cress).